A 283-amino-acid chain; its full sequence is Diaminopimelate epimerase (283 aa).

Substrate contacts are provided by Asn13, Gln45, and Asn65. The active-site Proton donor is the Cys74. Substrate contacts are provided by residues 75-76, Asn156, Asn190, and 208-209; these read GN and ER. The Proton acceptor role is filled by Cys217. A substrate-binding site is contributed by 218 to 219; sequence GS.

The protein belongs to the diaminopimelate epimerase family. As to quaternary structure, homodimer.

Its subcellular location is the cytoplasm. The catalysed reaction is (2S,6S)-2,6-diaminopimelate = meso-2,6-diaminopimelate. It participates in amino-acid biosynthesis; L-lysine biosynthesis via DAP pathway; DL-2,6-diaminopimelate from LL-2,6-diaminopimelate: step 1/1. Its function is as follows. Catalyzes the stereoinversion of LL-2,6-diaminopimelate (L,L-DAP) to meso-diaminopimelate (meso-DAP), a precursor of L-lysine and an essential component of the bacterial peptidoglycan. The protein is Diaminopimelate epimerase of Bartonella henselae (strain ATCC 49882 / DSM 28221 / CCUG 30454 / Houston 1) (Rochalimaea henselae).